We begin with the raw amino-acid sequence, 530 residues long: Glucose-6-phosphate 1-dehydrogenase (530 aa).

NADP(+)-binding positions include 53 to 60 (GASGDLAK), R87, Y162, and K186. D-glucose 6-phosphate contacts are provided by residues K186, 216 to 220 (HYLGK), E254, and D273. H278 functions as the Proton acceptor in the catalytic mechanism. Residue R372 participates in NADP(+) binding. 2 residues coordinate D-glucose 6-phosphate: K375 and R380. The NADP(+) site is built by K381, R385, and R408. Q410 is a D-glucose 6-phosphate binding site. NADP(+)-binding positions include 416–418 (YAK), 436–438 (DLT), R502, Y518, and W524.

The protein belongs to the glucose-6-phosphate dehydrogenase family.

It is found in the cytoplasm. Its subcellular location is the cytosol. The enzyme catalyses D-glucose 6-phosphate + NADP(+) = 6-phospho-D-glucono-1,5-lactone + NADPH + H(+). The protein operates within carbohydrate degradation; pentose phosphate pathway; D-ribulose 5-phosphate from D-glucose 6-phosphate (oxidative stage): step 1/3. In terms of biological role, cytosolic glucose-6-phosphate dehydrogenase that catalyzes the first and rate-limiting step of the oxidative branch within the pentose phosphate pathway/shunt, an alternative route to glycolysis for the dissimilation of carbohydrates and a major source of reducing power and metabolic intermediates for fatty acid and nucleic acid biosynthetic processes. In Takifugu rubripes (Japanese pufferfish), this protein is Glucose-6-phosphate 1-dehydrogenase (g6pd).